Consider the following 510-residue polypeptide: NAD(P)H-quinone oxidoreductase subunit 2 B, chloroplastic (510 aa).

13 helical membrane passes run 24–44 (LLLF…GLIL), 57–77 (IPWL…ALLF), 99–119 (IFQF…VEYI), 124–144 (MAIT…MFLC), 149–169 (LITI…LSGY), 183–203 (YLLM…WLYG), 227–247 (PGIS…LSPA), 295–315 (WHLL…LIAI), 323–343 (MLAY…IVGD), 354–374 (YMLF…LFGL), 395–415 (ALSL…AGFF), 418–438 (LYLF…IGLL), and 484–504 (MIVC…IIAI).

This sequence belongs to the complex I subunit 2 family. In terms of assembly, NDH is composed of at least 16 different subunits, 5 of which are encoded in the nucleus.

Its subcellular location is the plastid. The protein localises to the chloroplast thylakoid membrane. It catalyses the reaction a plastoquinone + NADH + (n+1) H(+)(in) = a plastoquinol + NAD(+) + n H(+)(out). It carries out the reaction a plastoquinone + NADPH + (n+1) H(+)(in) = a plastoquinol + NADP(+) + n H(+)(out). NDH shuttles electrons from NAD(P)H:plastoquinone, via FMN and iron-sulfur (Fe-S) centers, to quinones in the photosynthetic chain and possibly in a chloroplast respiratory chain. The immediate electron acceptor for the enzyme in this species is believed to be plastoquinone. Couples the redox reaction to proton translocation, and thus conserves the redox energy in a proton gradient. This is NAD(P)H-quinone oxidoreductase subunit 2 B, chloroplastic from Helianthus annuus (Common sunflower).